Consider the following 225-residue polypeptide: THAP domain-containing protein 1 A (225 aa).

The THAP-type zinc finger occupies 5-57 (CSAYGCKNRYDKDKPISFHKFPLKRPLLCKKWEAAVRRAEFKPTKYSSICSDH). Positions 139–194 (VEDTVHQRRRIQQLEEQVDKLRKKLKIANQKCRRQERSLEKLEREVSEYREAKGSG) form a coiled coil.

This sequence belongs to the THAP1 family.

Its subcellular location is the nucleus. The protein localises to the nucleoplasm. Functionally, DNA-binding transcription regulator that regulates endothelial cell proliferation and G1/S cell-cycle progression. Specifically binds the 5'-[AT]NTNN[GT]GGCA[AGT]-3' core DNA sequence and acts by modulating expression of pRB-E2F cell-cycle target genes. This chain is THAP domain-containing protein 1 A (thap1-a), found in Xenopus laevis (African clawed frog).